The primary structure comprises 97 residues: UPF0250 protein HD_2015 (97 aa).

It belongs to the UPF0250 family.

The chain is UPF0250 protein HD_2015 from Haemophilus ducreyi (strain 35000HP / ATCC 700724).